A 464-amino-acid polypeptide reads, in one-letter code: UDP-N-acetylmuramate--L-alanine ligase (464 aa).

115-121 provides a ligand contact to ATP; sequence GSHGKTT.

It belongs to the MurCDEF family.

It localises to the cytoplasm. The enzyme catalyses UDP-N-acetyl-alpha-D-muramate + L-alanine + ATP = UDP-N-acetyl-alpha-D-muramoyl-L-alanine + ADP + phosphate + H(+). It functions in the pathway cell wall biogenesis; peptidoglycan biosynthesis. In terms of biological role, cell wall formation. In Pelagibacter ubique (strain HTCC1062), this protein is UDP-N-acetylmuramate--L-alanine ligase.